Consider the following 404-residue polypeptide: MQQVNKVVLAYSGGVDTSVCIPYLKNEYGISEVVTFVADLGQGEDLELIRKKALNSGASKSIIGNLVSSFVERYAFPAIRANALYLDKYPLSTALARPLIAENLVNIAREINADAVAHGCTGKGNDQVRFDLAINALGPDLKIITPAREWNMSREEAILYGEKFGIPAPVSKKSPYSIDVNLLGRSIEAGILEDPMQEAPEDIFAMTSSINNSPESPLDIEIIFKNGFPVGINNEFLNPVEIIQKANVLAGEYGFGRIDMMEDRVVGIKSREIYETPGLLLLIKAHKELESITLNPDVIDFKGVVEKKWGQLVYQGFWFGPLKESLDAFIASTQTSVNGRVKIRLHKGNAIVIGRISENNSLYREDLATYSQDDVFKHSLAEGFIYMWGMSNKIWAELNSKKID.

Residues Ala-10–Ser-18 and Ala-38 contribute to the ATP site. Residue Tyr-89 participates in L-citrulline binding. Gly-119 serves as a coordination point for ATP. 3 residues coordinate L-aspartate: Thr-121, Asn-125, and Asp-126. Asn-125 contributes to the L-citrulline binding site. L-citrulline is bound by residues Arg-129, Ser-177, Ser-186, Glu-262, and Tyr-274.

Belongs to the argininosuccinate synthase family. Type 1 subfamily. Homotetramer.

Its subcellular location is the cytoplasm. The catalysed reaction is L-citrulline + L-aspartate + ATP = 2-(N(omega)-L-arginino)succinate + AMP + diphosphate + H(+). The protein operates within amino-acid biosynthesis; L-arginine biosynthesis; L-arginine from L-ornithine and carbamoyl phosphate: step 2/3. The chain is Argininosuccinate synthase from Prochlorococcus marinus (strain MIT 9312).